The primary structure comprises 271 residues: 3-methyl-2-oxobutanoate hydroxymethyltransferase (271 aa).

Positions 53 and 92 each coordinate Mg(2+). 3-methyl-2-oxobutanoate-binding positions include Asp-53 to Ser-54, Asp-92, and Lys-120. Glu-122 provides a ligand contact to Mg(2+). Glu-189 functions as the Proton acceptor in the catalytic mechanism.

This sequence belongs to the PanB family. In terms of assembly, homodecamer; pentamer of dimers. The cofactor is Mg(2+).

The protein localises to the cytoplasm. The catalysed reaction is 3-methyl-2-oxobutanoate + (6R)-5,10-methylene-5,6,7,8-tetrahydrofolate + H2O = 2-dehydropantoate + (6S)-5,6,7,8-tetrahydrofolate. It participates in cofactor biosynthesis; (R)-pantothenate biosynthesis; (R)-pantoate from 3-methyl-2-oxobutanoate: step 1/2. In terms of biological role, catalyzes the reversible reaction in which hydroxymethyl group from 5,10-methylenetetrahydrofolate is transferred onto alpha-ketoisovalerate to form ketopantoate. The protein is 3-methyl-2-oxobutanoate hydroxymethyltransferase of Paraburkholderia phymatum (strain DSM 17167 / CIP 108236 / LMG 21445 / STM815) (Burkholderia phymatum).